A 199-amino-acid polypeptide reads, in one-letter code: NAD(P)H dehydrogenase (quinone) (199 aa).

The Flavodoxin-like domain occupies 4 to 190 (VLVLYYSAYG…GGARYQGKVI (187 aa)). Residues 10-15 (SAYGHI) and 78-80 (TRF) contribute to the FMN site. An NAD(+)-binding site is contributed by Tyr12. Trp98 is a substrate binding site. Residues 113–119 (STASQHG) and His134 each bind FMN.

It belongs to the WrbA family. Requires FMN as cofactor.

It carries out the reaction a quinone + NADH + H(+) = a quinol + NAD(+). The enzyme catalyses a quinone + NADPH + H(+) = a quinol + NADP(+). In Rhodopseudomonas palustris (strain BisB18), this protein is NAD(P)H dehydrogenase (quinone).